The chain runs to 507 residues: Glucose transporter type 3 (507 aa).

Residues 1–26 (MRKGGIQDAEPVEPPQSSRKSGTWFA) are disordered. At 1–53 (MRKGGIQDAEPVEPPQSSRKSGTWFAKRPSEMPERHVERAPVRQKINNVGLYK) the chain is on the cytoplasmic side. Residues 54–74 (ATLYSNIGSFFFGIAVGWSGT) traverse the membrane as a helical segment. Residues 75-95 (AERSVMEQHSYSFQPTELQWS) are Extracellular-facing. The chain crosses the membrane as a helical span at residues 96–116 (GVCILLTLGAALWCLPMGLMV). Residues 117–124 (RLLGCRRT) lie on the Cytoplasmic side of the membrane. A helical transmembrane segment spans residues 125 to 145 (ILIQLLPNFLGWFLTVFARSV). The Extracellular portion of the chain corresponds to 146–152 (PMLYAGR). A helical transmembrane segment spans residues 153-173 (FFLGMCGGAHCVVVPIYNAEI). Topologically, residues 174–183 (STTKKRGAMG) are cytoplasmic. A helical membrane pass occupies residues 184 to 204 (VVFEGACICGVIYSFAMSLFL). At 205–207 (ELR) the chain is on the extracellular side. Residues 208-228 (IINFVNLGLLALGPLQILMPE) form a helical membrane-spanning segment. Residues 229 to 293 (SPAYYVDHGN…YKKVRRSLAR (65 aa)) lie on the Cytoplasmic side of the membrane. Residues 294 to 314 (SLAIALLQKLCGALIFIFYGL) traverse the membrane as a helical segment. Residues 315–324 (NMLDCLRIRR) are Extracellular-facing. The chain crosses the membrane as a helical span at residues 325–345 (EFGLILCLGLILGFLACFFLV). Over 346–351 (DRLGRR) the chain is Cytoplasmic. A helical membrane pass occupies residues 352–372 (PLLIFSSAGIVFVSIYLGLHF). The Extracellular segment spans residues 373–374 (KV). A helical membrane pass occupies residues 375–395 (WMTMGLTVMSWIALFCIAIFV). Residues 396 to 420 (GCYTAGVGSLTWVLNAELLVRPMRP) lie on the Cytoplasmic side of the membrane. A helical transmembrane segment spans residues 421–441 (LGCSIVCAFNWLTAFFVICWF). The Extracellular portion of the chain corresponds to 442–450 (GSHGVKCQP). Residues 451–471 (YLFLLFAIIASLILLFSLIYI) traverse the membrane as a helical segment. At 472–507 (PETKKLSSAKIQQRLGGLINRPAVITFTSSSDSSNA) the chain is on the cytoplasmic side.

It belongs to the major facilitator superfamily. Sugar transporter (TC 2.A.1.1) family. Glucose transporter subfamily.

The protein resides in the cell membrane. It localises to the perikaryon. It is found in the cell projection. Facilitative glucose transporter that can also mediate the uptake of various other monosaccharides across the cell membrane. The sequence is that of Glucose transporter type 3 (Glut3) from Drosophila melanogaster (Fruit fly).